Consider the following 120-residue polypeptide: Nitrogenase-stabilizing/protective protein NifW (120 aa).

It belongs to the NifW family. In terms of assembly, homotrimer; associates with NifD.

Its function is as follows. May protect the nitrogenase Fe-Mo protein from oxidative damage. The polypeptide is Nitrogenase-stabilizing/protective protein NifW (Rhodospirillum rubrum (strain ATCC 11170 / ATH 1.1.1 / DSM 467 / LMG 4362 / NCIMB 8255 / S1)).